The sequence spans 503 residues: GMP synthase [glutamine-hydrolyzing] (503 aa).

In terms of domain architecture, Glutamine amidotransferase type-1 spans 1 to 189 (MVLVLDFGSQ…FLELAGVKRD (189 aa)). Cys78 functions as the Nucleophile in the catalytic mechanism. Catalysis depends on residues His164 and Glu166. The 189-residue stretch at 190-378 (WTPEHVLEEL…LGLPDTLRLR (189 aa)) folds into the GMPS ATP-PPase domain. Residue 217–223 (SGGVDSS) coordinates ATP.

As to quaternary structure, homodimer.

It carries out the reaction XMP + L-glutamine + ATP + H2O = GMP + L-glutamate + AMP + diphosphate + 2 H(+). The protein operates within purine metabolism; GMP biosynthesis; GMP from XMP (L-Gln route): step 1/1. Its function is as follows. Catalyzes the synthesis of GMP from XMP. The protein is GMP synthase [glutamine-hydrolyzing] of Thermus thermophilus (strain ATCC 27634 / DSM 579 / HB8).